The primary structure comprises 104 residues: MAAKIKKGDTVVVLTGRDAGRSGEVIQVLPKDGKAFVRGVNLVKKHQKQTQNAEGGIISKEAAIQLSNLAFQDVNGKPTRVGFRILEDGRKVRFAKTTGDQIDG.

Belongs to the universal ribosomal protein uL24 family. Part of the 50S ribosomal subunit.

In terms of biological role, one of two assembly initiator proteins, it binds directly to the 5'-end of the 23S rRNA, where it nucleates assembly of the 50S subunit. Its function is as follows. One of the proteins that surrounds the polypeptide exit tunnel on the outside of the subunit. In Methylorubrum populi (strain ATCC BAA-705 / NCIMB 13946 / BJ001) (Methylobacterium populi), this protein is Large ribosomal subunit protein uL24.